Here is a 618-residue protein sequence, read N- to C-terminus: Nuclear RNA export factor 1 (618 aa).

The span at 1–15 (MADEGKSYNEHDDRV) shows a compositional bias: basic and acidic residues. The segment at 1–113 (MADEGKSYNE…RGGAGTSQDG (113 aa)) is disordered. N-acetylalanine is present on A2. A minor non-specific RNA-binding region spans residues 2–59 (ADEGKSYNEHDDRVSFPQRRKKGRGPFRWKCGEGNRRSGRGGSGVQSSRFEEDDGDVA). Residues 2–117 (ADEGKSYNEH…GTSQDGTTKN (116 aa)) are RNA-binding (RBD). An interaction with ALYREF/THOC4 and LUZP4 region spans residues 2–197 (ADEGKSYNEH…IIINASAPPY (196 aa)). A compositionally biased stretch (basic residues) spans 19–28 (QRRKKGRGPF). At R41 the chain carries Asymmetric dimethylarginine; alternate. R41 carries the omega-N-methylarginine; alternate modification. A major non-specific RNA-binding region spans residues 60–117 (MNDPQDGPRVRYNPYTNRPNRRGDGWHDRDRIHITVRRDRAPAERGGAGTSQDGTTKN). The tract at residues 60 to 117 (MNDPQDGPRVRYNPYTNRPNRRGDGWHDRDRIHITVRRDRAPAERGGAGTSQDGTTKN) is RNA binding. Residues 66–99 (GPRVRYNPYTNRPNRRGDGWHDRDRIHITVRRDR) carry the Nuclear localization signal motif. Positions 80 to 102 (RRGDGWHDRDRIHITVRRDRAPA) are enriched in basic and acidic residues. The short motif at 82 to 109 (GDGWHDRDRIHITVRRDRAPAERGGAGT) is the Nuclear export signal element. One can recognise an RRM domain in the interval 118–197 (WFKITIPYGR…IIINASAPPY (80 aa)). The residue at position 125 (Y125) is a 3'-nitrotyrosine. 4 LRR repeats span residues 265 to 290 (ELLS…QKAP), 291 to 314 (NLKT…IKGL), 315 to 342 (KLEE…AIRE), and 343 to 370 (RFPK…TMLP). Positions 385–535 (LVLRFLQQYY…LCIVNDELFV (151 aa)) constitute an NTF2 domain. In terms of domain architecture, TAP-C spans 564–618 (PEQQEMLQAFSTQSGMNLEWSQKCLQDNNWDYTRSAQAFTLLKAKGEIPEVAFMK).

This sequence belongs to the NXF family. As to quaternary structure, heterodimer (via NTF2 domain) with NXT1. The formation of NXF1-NXT1 heterodimers is required for the NXF1-mediated nuclear mRNA export. Forms a complex with RANBP2/NUP358, NXT1 and RANGAP1. Associates with the exon junction complex (EJC). Associates with the transcription/export (TREX) complex. Found in a mRNA complex with UPF3A and UPF3B. Found in a post-splicing complex with RBM8A, UPF1, UPF2, UPF3A, UPF3B and RNPS1. Interacts (via N-terminus) with DHX9 (via N-terminus); this interaction is direct and negatively regulates NXF1-mediated nuclear export of constitutive transport element (CTE)-containing cellular mRNAs. Interacts with FYTTD1/UIF. Interacts with EIF4A3. Interacts with NUP42. Interacts with ALYREF/THOC4. Interacts with CHTOP. Interacts with FRG1 (via N-terminus). Interacts with LUZP4. Interacts with FMR1; the interaction occurs in a mRNA-dependent and polyribosomes-independent manner in the nucleus. Interacts with CPSF6 (via N-terminus); this interaction is direct. Interacts with RBM15. Interacts with RBM15B. Interacts with MCM3AP; this interaction is not mediated by RNA. Interacts with DDX3X (via C-terminus); this interaction may be partly involved in DDX3X nuclear export and in NXF1 localization to stress granules. Interacts with PABPC1/PABP1. In terms of tissue distribution, expressed ubiquitously.

Its subcellular location is the nucleus. The protein localises to the nucleoplasm. It is found in the nucleus speckle. The protein resides in the cytoplasm. It localises to the nuclear pore complex. Its subcellular location is the nucleus envelope. The protein localises to the stress granule. Involved in the nuclear export of mRNA species bearing retroviral constitutive transport elements (CTE) and in the export of mRNA from the nucleus to the cytoplasm (TAP/NFX1 pathway). The NXF1-NXT1 heterodimer is involved in the export of HSP70 mRNA in conjunction with ALYREF/THOC4 and THOC5 components of the TREX complex. ALYREF/THOC4-bound mRNA is thought to be transferred to the NXF1-NXT1 heterodimer for export. Also involved in nuclear export of m6A-containing mRNAs: interaction between SRSF3 and YTHDC1 facilitates m6A-containing mRNA-binding to both SRSF3 and NXF1, promoting mRNA nuclear export. In Mus musculus (Mouse), this protein is Nuclear RNA export factor 1 (Nxf1).